The primary structure comprises 924 residues: Hexokinase-3 (924 aa).

A disordered region spans residues 1–27 (MAAIEPSGLHPGERDSSCPQEGIPRPS). Hexokinase domains are found at residues 27–471 (SGSL…MVTA) and 477–913 (ATHR…LVTR). A hexokinase small subdomain 1 region spans residues 84–220 (HGTEQGDFLV…TYNIDVVAMV (137 aa)). 95-102 (ELGATGAS) is an ATP binding site. 95 to 104 (ELGATGASLR) serves as a coordination point for D-glucose 6-phosphate. Residues Ser168, 185-186 (TK), and 221-222 (ND) each bind D-glucose. The segment at 221 to 460 (NDTVGTMMGC…CDVSFIPSVD (240 aa)) is hexokinase large subdomain 1. D-glucose 6-phosphate-binding residues include Asp222 and Thr245. D-glucose contacts are provided by residues Asn248, Glu273, and 304-307 (QRFE). Residue 426–428 (GGR) participates in D-glucose 6-phosphate binding. ATP-binding positions include 438 to 439 (CI) and 542 to 547 (DLGGTN). The tract at residues 531-662 (DGSERGDFLA…AVELNVVAIV (132 aa)) is hexokinase small subdomain 2. 542–546 (DLGGT) lines the D-glucose 6-phosphate pocket. Residues 610 to 611 (SF), 627 to 628 (TK), and 663 to 664 (ND) contribute to the D-glucose site. The interval 663–902 (NDTVGTMMSC…CTVTFLQSED (240 aa)) is hexokinase large subdomain 2. Asp664 and Thr687 together coordinate D-glucose 6-phosphate. Thr687 serves as a coordination point for ATP. D-glucose-binding positions include 689–690 (TN), Glu715, and Glu749. ATP contacts are provided by residues 754-755 (GM), 791-795 (TKFLS), and 870-874 (TLYKL). Residues 868 to 870 (DGT) and Ser904 each bind D-glucose 6-phosphate.

This sequence belongs to the hexokinase family.

It carries out the reaction a D-hexose + ATP = a D-hexose 6-phosphate + ADP + H(+). It catalyses the reaction D-fructose + ATP = D-fructose 6-phosphate + ADP + H(+). The catalysed reaction is D-glucose + ATP = D-glucose 6-phosphate + ADP + H(+). The protein operates within carbohydrate metabolism; hexose metabolism. It participates in carbohydrate degradation; glycolysis; D-glyceraldehyde 3-phosphate and glycerone phosphate from D-glucose: step 1/4. With respect to regulation, hexokinase is an allosteric enzyme inhibited by its product D-glucose 6-phosphate. Catalyzes the phosphorylation of hexose, such as D-glucose and D-fructose, to hexose 6-phosphate (D-glucose 6-phosphate and D-fructose 6-phosphate, respectively). Mediates the initial step of glycolysis by catalyzing phosphorylation of D-glucose to D-glucose 6-phosphate. This is Hexokinase-3 from Rattus norvegicus (Rat).